Consider the following 347-residue polypeptide: MAGEGALQFYRDLPKVELHAHLNGSISTATMKKLMARKPHLDIQHGMTMIDKGQKRTLEECFQMFKIIHQITDTAEDILLVTKDVIKEFAADGVKYLELRSTPRDTPAGLTKQAYVETVLEGIKQCKEEGVDIDVRFLLAIDRRGGPTAAKETVKLAEDFFCSSNELVLGLDLSGDPTVGHGRDFMEPLNKARQSGLKLALHLSEIPSQTEETELLLGLPPDRIGHGTFLTTSAHIVEIVKKQHIPLELCITSNIKGQTVSSYNEHHFGFWYNLHHPFVLCTDDKGVFATDLSVEYEIAAKTFNLTPHHVWDLSYQAIDYTFASADVKANLKEKWLLLKPDVFRHAL.

The Zn(2+) site is built by His-19 and His-21. N(6)-methyl-AMP contacts are provided by residues His-21, Asn-23, His-69, 101–104, Asp-142, and Gly-175; that span reads STPR. His-202 contacts Zn(2+). N(6)-methyl-AMP is bound by residues Glu-205, Asp-283, and Asp-284. Glu-205 serves as the catalytic Proton donor. Zn(2+) is bound at residue Asp-283.

This sequence belongs to the metallo-dependent hydrolases superfamily. Adenosine and AMP deaminases family. In terms of assembly, monomer. Requires Zn(2+) as cofactor.

The enzyme catalyses N(6)-methyl-AMP + H2O + H(+) = IMP + methylamine. Catalyzes the hydrolysis of the free cytosolic methylated adenosine nucleotide N(6)-methyl-AMP (N6-mAMP) to produce inositol monophosphate (IMP) and methylamine. Is required for the catabolism of cytosolic N6-mAMP, which is derived from the degradation of mRNA containing N6-methylated adenine (m6A). This is N6-Methyl-AMP deaminase-L (mapda.L) from Xenopus laevis (African clawed frog).